The sequence spans 121 residues: Large ribosomal subunit protein uL22 (121 aa).

This sequence belongs to the universal ribosomal protein uL22 family. As to quaternary structure, part of the 50S ribosomal subunit.

This protein binds specifically to 23S rRNA; its binding is stimulated by other ribosomal proteins, e.g. L4, L17, and L20. It is important during the early stages of 50S assembly. It makes multiple contacts with different domains of the 23S rRNA in the assembled 50S subunit and ribosome. In terms of biological role, the globular domain of the protein is located near the polypeptide exit tunnel on the outside of the subunit, while an extended beta-hairpin is found that lines the wall of the exit tunnel in the center of the 70S ribosome. This Synechococcus sp. (strain CC9605) protein is Large ribosomal subunit protein uL22.